Consider the following 354-residue polypeptide: Stimulator of interferon genes protein 3 (354 aa).

4 helical membrane passes run 20–40 (VTFA…FALW), 48–68 (INFV…GELI), 101–121 (YGSC…YALL), and 132–152 (YGIF…IVGI). 3',3'-cGAMP is bound by residues Asn-178, Tyr-183, Arg-250, Ile-251, Lys-253, Glu-272, Ser-275, and Asn-276.

The protein belongs to the STING family.

The protein resides in the membrane. Functionally, facilitator of innate immune signaling that acts as a sensor of second messenger signals produced by cyclic GMP-AMP synthase-like receptors (cGLRs) and promotes the production of type I interferon. Innate immune response is triggered in response to nucleotides from viruses and bacteria delivered to the cytoplasm. Acts by binding cyclic dinucleotides: recognizes and binds cyclic 3'-3' linked cGAMP (3'-3'-cGAMP), cyclic di-AMP (3',3'-c-di-AMP) and cyclic di-GMP (3',3'-c-di-GMP) second messengers produced by cGLRs in response to nucleotides in the cytosol, such as double-stranded RNA (dsRNA). Upon binding to 3'-3'-cGAMP, 3',3'-c-di-AMP or 3',3'-c-di-GMP, oligomerizes and promotes the recruitment and subsequent activation of the transcription factor IRF3 to induce expression of type I interferon. In Stylophora pistillata (Smooth cauliflower coral), this protein is Stimulator of interferon genes protein 3.